Consider the following 130-residue polypeptide: Large ribosomal subunit protein bL12 (130 aa).

This sequence belongs to the bacterial ribosomal protein bL12 family. Homodimer. Part of the ribosomal stalk of the 50S ribosomal subunit. Forms a multimeric L10(L12)X complex, where L10 forms an elongated spine to which 2 to 4 L12 dimers bind in a sequential fashion. Binds GTP-bound translation factors.

Forms part of the ribosomal stalk which helps the ribosome interact with GTP-bound translation factors. Is thus essential for accurate translation. The polypeptide is Large ribosomal subunit protein bL12 (Chlamydia muridarum (strain MoPn / Nigg)).